A 621-amino-acid polypeptide reads, in one-letter code: tRNA uridine 5-carboxymethylaminomethyl modification enzyme MnmG (621 aa).

An FAD-binding site is contributed by 9–14 (GGGHAG). NAD(+) is bound at residue 270–284 (GPRYCPSIEDKIVKF).

Belongs to the MnmG family. Homodimer. Heterotetramer of two MnmE and two MnmG subunits. Requires FAD as cofactor.

The protein resides in the cytoplasm. In terms of biological role, NAD-binding protein involved in the addition of a carboxymethylaminomethyl (cmnm) group at the wobble position (U34) of certain tRNAs, forming tRNA-cmnm(5)s(2)U34. This is tRNA uridine 5-carboxymethylaminomethyl modification enzyme MnmG from Borrelia garinii subsp. bavariensis (strain ATCC BAA-2496 / DSM 23469 / PBi) (Borreliella bavariensis).